A 253-amino-acid chain; its full sequence is Large ribosomal subunit protein bL28m (253 aa).

Residues 1–55 (MPLHKYPPALWDVLKLKDGIYARLPEHYRRSLLEKHKPYPVHWKPHGLKYRLNPK) constitute a mitochondrion transit peptide.

The protein belongs to the bacterial ribosomal protein bL28 family. In terms of assembly, component of the mitochondrial ribosome large subunit (39S) which comprises a 16S rRNA and about 50 distinct proteins.

The protein localises to the mitochondrion. The sequence is that of Large ribosomal subunit protein bL28m (mrpl28) from Xenopus laevis (African clawed frog).